Here is a 117-residue protein sequence, read N- to C-terminus: Ribonuclease P protein component (117 aa).

The protein belongs to the RnpA family. In terms of assembly, consists of a catalytic RNA component (M1 or rnpB) and a protein subunit.

The enzyme catalyses Endonucleolytic cleavage of RNA, removing 5'-extranucleotides from tRNA precursor.. Functionally, RNaseP catalyzes the removal of the 5'-leader sequence from pre-tRNA to produce the mature 5'-terminus. It can also cleave other RNA substrates such as 4.5S RNA. The protein component plays an auxiliary but essential role in vivo by binding to the 5'-leader sequence and broadening the substrate specificity of the ribozyme. The polypeptide is Ribonuclease P protein component (Aliivibrio salmonicida (strain LFI1238) (Vibrio salmonicida (strain LFI1238))).